The sequence spans 117 residues: uncharacterized protein (117 aa).

Residues 1-21 form a helical membrane-spanning segment; sequence MEIAIIALFIVSIALIAFSYS. The stretch at 38-67 forms a coiled coil; it reads LSAMQEIYKLKKKMTVLEEELLETNLVIRK.

It is found in the cell membrane. This is an uncharacterized protein from Bacillus subtilis (strain 168).